The chain runs to 182 residues: MEENLADNSEREARPSKTKRKKEMHALQNIGESLVRLDSRRLIELGLPDTLMEAVLEAKRMSKHGALRRQMQLIGKLMRDVDAEPIRKKLDLWGNSSAESTARLHQLERWRERLMADQQMQALSELGQKYPDADLQRLRALARNAVKEKLANKPPKSFRALFQELQKIIPAATGERPGEGID.

Residues 1 to 25 form a disordered region; that stretch reads MEENLADNSEREARPSKTKRKKEMH.

This sequence belongs to the DarP family.

It localises to the cytoplasm. Its function is as follows. Member of a network of 50S ribosomal subunit biogenesis factors which assembles along the 30S-50S interface, preventing incorrect 23S rRNA structures from forming. Promotes peptidyl transferase center (PTC) maturation. In Nitrosospira multiformis (strain ATCC 25196 / NCIMB 11849 / C 71), this protein is Dual-action ribosomal maturation protein DarP.